The primary structure comprises 171 residues: Ribosome maturation factor RimM (171 aa).

The PRC barrel domain occupies 97-170 (EGEYYYHEII…LVTIHVMEGL (74 aa)).

This sequence belongs to the RimM family. As to quaternary structure, binds ribosomal protein uS19.

It localises to the cytoplasm. An accessory protein needed during the final step in the assembly of 30S ribosomal subunit, possibly for assembly of the head region. Essential for efficient processing of 16S rRNA. May be needed both before and after RbfA during the maturation of 16S rRNA. It has affinity for free ribosomal 30S subunits but not for 70S ribosomes. The sequence is that of Ribosome maturation factor RimM from Bacillus thuringiensis (strain Al Hakam).